A 414-amino-acid polypeptide reads, in one-letter code: MADSKTKKKCSFCGRSENEVGFLITGMNGYICDSCATQAYEITQEALGEGRKRAGATKLNLKELPKPVEIKKFLDQYVIGQDDAKRFLSVSVYNHYKRLLQKDSGDDVEIEKSNIIMVGSTGTGKTLLARTIAKLLHVPFTIVDATVLTEAGYVGEDIESILTRLLQVADYNVPEAEQGIVFIDEIDKIARKGDNPSITRDVSGEGVQQGLLKLLEGSVVNVPPQGGRKHPDQKMIPVNTKNILFICGGAFDGIEKKIAQRLNTHVVGYTASQKTAVIDKNNMMQYIAPQDLKSFGLIPEIIGRLPVLTYLNPLDRNALRAILTEPKNSIIKQYIKLFEMDGIKLTFEDSVFEYIVDKAVEYKLGARGLRSIVETIMMDVMFEIPSESKKEYKVTLDYAKQQLEKANMARLQIA.

Positions 1 to 51 constitute a ClpX-type ZB domain; it reads MADSKTKKKCSFCGRSENEVGFLITGMNGYICDSCATQAYEITQEALGEGR. Cys-10, Cys-13, Cys-32, and Cys-35 together coordinate Zn(2+). ATP is bound at residue 120–127; that stretch reads STGTGKTL.

This sequence belongs to the ClpX chaperone family. Component of the ClpX-ClpP complex. Forms a hexameric ring that, in the presence of ATP, binds to fourteen ClpP subunits assembled into a disk-like structure with a central cavity, resembling the structure of eukaryotic proteasomes.

Its function is as follows. ATP-dependent specificity component of the Clp protease. It directs the protease to specific substrates. Can perform chaperone functions in the absence of ClpP. The chain is ATP-dependent Clp protease ATP-binding subunit ClpX from Bacteroides thetaiotaomicron (strain ATCC 29148 / DSM 2079 / JCM 5827 / CCUG 10774 / NCTC 10582 / VPI-5482 / E50).